The sequence spans 352 residues: Guanine nucleotide-binding protein alpha-7 subunit (352 aa).

The N-myristoyl glycine moiety is linked to residue glycine 2. The S-palmitoyl cysteine moiety is linked to residue cysteine 4. One can recognise a G-alpha domain in the interval 32 to 352 (RIIKLLLLGA…AKNLKSMGLC (321 aa)). Positions 35 to 48 (KLLLLGAGESGKST) are G1 motif. Residues 40–47 (GAGESGKS), 174–180 (LRTRIKT), 199–203 (DVGGQ), 268–271 (NKKD), and alanine 324 each bind GTP. Mg(2+)-binding residues include serine 47 and threonine 180. The G2 motif stretch occupies residues 172–180 (DLLRTRIKT). Positions 195–204 (FRVIDVGGQR) are G3 motif. The tract at residues 264–271 (ILFLNKKD) is G4 motif. The tract at residues 322-327 (TCATDT) is G5 motif.

The protein belongs to the G-alpha family. G(i/o/t/z) subfamily. G proteins are composed of 3 units; alpha, beta and gamma. The alpha chain contains the guanine nucleotide binding site.

Its function is as follows. Guanine nucleotide-binding proteins (G proteins) are involved as modulators or transducers in various transmembrane signaling systems. The protein is Guanine nucleotide-binding protein alpha-7 subunit (gpa-7) of Caenorhabditis briggsae.